We begin with the raw amino-acid sequence, 413 residues long: DnaJ protein homolog xdj1 (413 aa).

In terms of domain architecture, J spans lysine 6–glycine 73. The segment at glycine 134–glutamine 219 adopts a CR-type zinc-finger fold. 4 CXXCXGXG motif repeats span residues cysteine 147–glycine 154, cysteine 164–glycine 171, cysteine 191–glycine 198, and cysteine 207–glycine 214. At cysteine 410 the chain carries Cysteine methyl ester. Cysteine 410 carries the S-farnesyl cysteine lipid modification. A propeptide spans glutamine 411–glutamine 413 (removed in mature form).

The protein localises to the endoplasmic reticulum membrane. The chain is DnaJ protein homolog xdj1 (xdj1) from Schizosaccharomyces pombe (strain 972 / ATCC 24843) (Fission yeast).